Here is a 622-residue protein sequence, read N- to C-terminus: Solute carrier family 2, facilitated glucose transporter member 12 (622 aa).

Positions methionine 1–cysteine 26 are disordered. Residues methionine 1–threonine 44 are Cytoplasmic-facing. The chain crosses the membrane as a helical span at residues phenylalanine 45–isoleucine 65. Residues serine 66–glutamate 84 are Extracellular-facing. Residues methionine 85 to isoleucine 105 traverse the membrane as a helical segment. The Cytoplasmic portion of the chain corresponds to aspartate 106 to arginine 111. The chain crosses the membrane as a helical span at residues leucine 112 to leucine 132. Topologically, residues serine 133–arginine 141 are extracellular. Residues valine 142–isoleucine 162 form a helical membrane-spanning segment. Residues alanine 163–arginine 168 lie on the Cytoplasmic side of the membrane. The helical transmembrane segment at glycine 169 to serine 189 threads the bilayer. The Extracellular segment spans residues asparagine 190–lysine 201. Asparagine 195 carries N-linked (GlcNAc...) asparagine glycosylation. The helical transmembrane segment at tyrosine 202–proline 222 threads the bilayer. At proline 223–arginine 282 the chain is on the cytoplasmic side. Residues isoleucine 283–phenylalanine 303 traverse the membrane as a helical segment. Residues tyrosine 304–serine 321 lie on the Extracellular side of the membrane. The chain crosses the membrane as a helical span at residues leucine 322–valine 342. The Cytoplasmic segment spans residues aspartate 343–threonine 349. Residues phenylalanine 350 to leucine 370 form a helical membrane-spanning segment. Topologically, residues asparagine 371–alanine 471 are extracellular. Asparagine 375, asparagine 387, asparagine 400, and asparagine 405 each carry an N-linked (GlcNAc...) asparagine glycan. Residues serine 472 to leucine 492 traverse the membrane as a helical segment. The Cytoplasmic portion of the chain corresponds to serine 493–arginine 503. A helical membrane pass occupies residues alanine 504–leucine 524. Topologically, residues threonine 525–serine 533 are extracellular. Residues tryptophan 534 to isoleucine 554 traverse the membrane as a helical segment. Residues proline 555–threonine 622 are Cytoplasmic-facing.

The protein belongs to the major facilitator superfamily. Sugar transporter (TC 2.A.1.1) family. Glucose transporter subfamily. As to expression, expressed in skeletal muscle, heart, brain, kidney, spleen, adipose tissues and to a lesser extent in small intestine and lung.

It is found in the cell membrane. Its subcellular location is the endomembrane system. The protein resides in the cytoplasm. It localises to the perinuclear region. It catalyses the reaction D-glucose(out) = D-glucose(in). In terms of biological role, insulin-independent facilitative glucose transporter. The sequence is that of Solute carrier family 2, facilitated glucose transporter member 12 from Mus musculus (Mouse).